Reading from the N-terminus, the 219-residue chain is MEAITTNGITLRRTVAAAQGDDALRAMGERITGALGPAVTDWSIAHGELTLIVQGSDIVYALTYLRDDPNCAFRCFIDICGVDYPQRARRFDVVYHLLSLRHNMRVRVKVQTDAATPVPSAIPVFPAANWFERETYDLYGILFSGHPDLRRLLTDYGFEGHPLRKDFPLTGFVEVRYDQDEARVVYEPVKLTQEFRNFDFLSPWEGTDYVLPGDEKKSS.

This sequence belongs to the complex I 30 kDa subunit family. In terms of assembly, NDH-1 is composed of 14 different subunits. Subunits NuoB, C, D, E, F, and G constitute the peripheral sector of the complex.

It localises to the cell inner membrane. It catalyses the reaction a quinone + NADH + 5 H(+)(in) = a quinol + NAD(+) + 4 H(+)(out). Functionally, NDH-1 shuttles electrons from NADH, via FMN and iron-sulfur (Fe-S) centers, to quinones in the respiratory chain. The immediate electron acceptor for the enzyme in this species is believed to be ubiquinone. Couples the redox reaction to proton translocation (for every two electrons transferred, four hydrogen ions are translocated across the cytoplasmic membrane), and thus conserves the redox energy in a proton gradient. This chain is NADH-quinone oxidoreductase subunit C, found in Methylorubrum populi (strain ATCC BAA-705 / NCIMB 13946 / BJ001) (Methylobacterium populi).